Consider the following 255-residue polypeptide: tRNA-cytidine(32) 2-sulfurtransferase (255 aa).

The PP-loop motif signature appears at 37–42 (SGGKDS). [4Fe-4S] cluster is bound by residues cysteine 112, cysteine 115, and cysteine 202.

This sequence belongs to the TtcA family. As to quaternary structure, homodimer. Mg(2+) serves as cofactor. The cofactor is [4Fe-4S] cluster.

It localises to the cytoplasm. It carries out the reaction cytidine(32) in tRNA + S-sulfanyl-L-cysteinyl-[cysteine desulfurase] + AH2 + ATP = 2-thiocytidine(32) in tRNA + L-cysteinyl-[cysteine desulfurase] + A + AMP + diphosphate + H(+). The protein operates within tRNA modification. Functionally, catalyzes the ATP-dependent 2-thiolation of cytidine in position 32 of tRNA, to form 2-thiocytidine (s(2)C32). The sulfur atoms are provided by the cysteine/cysteine desulfurase (IscS) system. This Citrifermentans bemidjiense (strain ATCC BAA-1014 / DSM 16622 / JCM 12645 / Bem) (Geobacter bemidjiensis) protein is tRNA-cytidine(32) 2-sulfurtransferase.